Here is a 132-residue protein sequence, read N- to C-terminus: Small ribosomal subunit protein uS8 (132 aa).

The protein belongs to the universal ribosomal protein uS8 family. Part of the 30S ribosomal subunit. Contacts proteins S5 and S12.

One of the primary rRNA binding proteins, it binds directly to 16S rRNA central domain where it helps coordinate assembly of the platform of the 30S subunit. The protein is Small ribosomal subunit protein uS8 of Streptococcus thermophilus (strain CNRZ 1066).